The chain runs to 196 residues: Zinc metalloproteinase-disintegrin-like bothrojarin-3 (196 aa).

One can recognise a Disintegrin domain in the interval 2 to 88 (PPVCGTELLE…DCPTDDIQRN (87 aa)). Positions 4, 9, 11, 14, and 17 each coordinate Ca(2+). 13 disulfide bridges follow: Cys-5–Cys-34, Cys-16–Cys-29, Cys-18–Cys-24, Cys-28–Cys-51, Cys-42–Cys-48, Cys-47–Cys-73, Cys-60–Cys-80, Cys-67–Cys-99, Cys-92–Cys-104, Cys-111–Cys-161, Cys-126–Cys-168, Cys-139–Cys-149, and Cys-156–Cys-193. Residues 66-68 (ECD) carry the D/ECD-tripeptide motif.

The protein belongs to the venom metalloproteinase (M12B) family. P-III subfamily. P-IIIa sub-subfamily. Monomer. Zn(2+) is required as a cofactor. Post-translationally, glycosylated. As to expression, expressed by the venom gland.

The protein resides in the secreted. Its function is as follows. The hemorrhagic metalloproteinase-disintegrin-like bothrojarin-1 is a potent inhibitor of collagen-induced platelet aggregation by blockage of alpha-2/beta-1 (ITGA2/ITGB1) integrin. It does not present any fibrinogen-clotting activity. The polypeptide is Zinc metalloproteinase-disintegrin-like bothrojarin-3 (Bothrops jararaca (Jararaca)).